A 418-amino-acid chain; its full sequence is Queuine tRNA-ribosyltransferase accessory subunit 2 (418 aa).

Zn(2+) contacts are provided by C325, C327, C330, and H356.

This sequence belongs to the queuine tRNA-ribosyltransferase family. QTRT2 subfamily. In terms of assembly, heterodimer of a catalytic subunit and an accessory subunit. The cofactor is Zn(2+).

It localises to the cytoplasm. Non-catalytic subunit of the queuine tRNA-ribosyltransferase (TGT) that catalyzes the base-exchange of a guanine (G) residue with queuine (Q) at position 34 (anticodon wobble position) in tRNAs with GU(N) anticodons (tRNA-Asp, -Asn, -His and -Tyr), resulting in the hypermodified nucleoside queuosine (7-(((4,5-cis-dihydroxy-2-cyclopenten-1-yl)amino)methyl)-7-deazaguanosine). The chain is Queuine tRNA-ribosyltransferase accessory subunit 2 from Drosophila erecta (Fruit fly).